Reading from the N-terminus, the 527-residue chain is Peptide chain release factor 3 (527 aa).

The tr-type G domain occupies 10–278 (DKRRTFAIIS…AFIEYAPAPL (269 aa)). Residues 19-26 (SHPDAGKT), 87-91 (DTPGH), and 141-144 (NKLD) contribute to the GTP site.

It belongs to the TRAFAC class translation factor GTPase superfamily. Classic translation factor GTPase family. PrfC subfamily.

It is found in the cytoplasm. Functionally, increases the formation of ribosomal termination complexes and stimulates activities of RF-1 and RF-2. It binds guanine nucleotides and has strong preference for UGA stop codons. It may interact directly with the ribosome. The stimulation of RF-1 and RF-2 is significantly reduced by GTP and GDP, but not by GMP. This chain is Peptide chain release factor 3, found in Pelobacter propionicus (strain DSM 2379 / NBRC 103807 / OttBd1).